A 207-amino-acid polypeptide reads, in one-letter code: Proteasome subunit beta (207 aa).

The propeptide at 1–7 (MVEAFKG) is removed in mature form; by autocatalysis. Residue threonine 8 is the Nucleophile of the active site.

The protein belongs to the peptidase T1B family. As to quaternary structure, the 20S proteasome core is composed of 14 alpha and 14 beta subunits that assemble into four stacked heptameric rings, resulting in a barrel-shaped structure. The two inner rings, each composed of seven catalytic beta subunits, are sandwiched by two outer rings, each composed of seven alpha subunits. The catalytic chamber with the active sites is on the inside of the barrel. Has a gated structure, the ends of the cylinder being occluded by the N-termini of the alpha-subunits. Is capped at one or both ends by the proteasome regulatory ATPase, PAN.

Its subcellular location is the cytoplasm. It catalyses the reaction Cleavage of peptide bonds with very broad specificity.. With respect to regulation, the formation of the proteasomal ATPase PAN-20S proteasome complex, via the docking of the C-termini of PAN into the intersubunit pockets in the alpha-rings, triggers opening of the gate for substrate entry. Interconversion between the open-gate and close-gate conformations leads to a dynamic regulation of the 20S proteasome proteolysis activity. In terms of biological role, component of the proteasome core, a large protease complex with broad specificity involved in protein degradation. This Methanothrix thermoacetophila (strain DSM 6194 / JCM 14653 / NBRC 101360 / PT) (Methanosaeta thermophila) protein is Proteasome subunit beta.